Reading from the N-terminus, the 717-residue chain is Serine/threonine-protein kinase STE11 (717 aa).

Residues 20–84 (NDLPFVQLFL…LRKSKSFQRD (65 aa)) enclose the SAM domain. Serine 323 is modified (phosphoserine). A Protein kinase domain is found at 415–712 (WLKGACIGSG…ALELLQHPWL (298 aa)). ATP-binding positions include 421–429 (IGSGSFGSV) and lysine 444. A compositionally biased stretch (polar residues) spans 452 to 466 (NIGVPTDNNKQANSD). Residues 452–481 (NIGVPTDNNKQANSDENNEQEEQQEKIEDV) are disordered. A Phosphoserine modification is found at serine 465. The active-site Proton acceptor is the aspartate 579.

Belongs to the protein kinase superfamily. STE Ser/Thr protein kinase family. MAP kinase kinase kinase subfamily. As to quaternary structure, homodimer. Interacts (via SAM domain) with STE50 (via SAM domain). Interacts with PBS2 and SHO1.

The catalysed reaction is L-seryl-[protein] + ATP = O-phospho-L-seryl-[protein] + ADP + H(+). It carries out the reaction L-threonyl-[protein] + ATP = O-phospho-L-threonyl-[protein] + ADP + H(+). Serine/threonine protein kinase required for cell-type-specific transcription and signal transduction in yeast. It is thought that it phosphorylates the STE7 protein kinase which itself, phosphorylates the FUS3 and or KSS1 kinases. The polypeptide is Serine/threonine-protein kinase STE11 (STE11) (Saccharomyces cerevisiae (strain ATCC 204508 / S288c) (Baker's yeast)).